Reading from the N-terminus, the 421-residue chain is MHRFFKSEFFNFEFIRILSAAPYGGAEIAECLVAAGQITNDDPESWHRAWIIQADKAKALGDEALHSGDTVSARRAYLRASNYYRASGYMFHDRPGAPDARVLPLAQQVLDTYALTLPLLDTGEASQLKIPFENYQLAAYLYLPRDRTKPVPVLLSLGGADSIQEELYYVYAASGPQLGYAVLTFEGPGQGITLRRDKMHMRPDWEVVVGRVLDFLTAYMQQNPSVQLDLSRVAVVGASMGGYYALRAAVDPRIGACVSIDPFYDMWDFVRNHVSPALLNAWNAGWVPSRVVNGIMSMAMAASFQAKWEVGLAMWFFGVDSPTQTLRHMMKYTLARADGTSRLDQVKCPVLVSGATQSLYLEPESDVLRVFDALAHLGDERREIWIARSPEEGGLQAKIGAIGLVVQRTFRFLDQHLNVTR.

Ser239 functions as the Nucleophile in the catalytic mechanism.

This sequence belongs to the AB hydrolase superfamily. FUS2 hydrolase family. As to quaternary structure, homodimer.

It functions in the pathway secondary metabolite biosynthesis. In terms of biological role, hydrolyase; part of the gene cluster that mediates the biosynthesis of oxaleimides, cytotoxic compounds containing an unusual disubstituted succinimide moiety. The first step of the pathway is provided by the HR-PKS poxF that serves in a new mode of collaborative biosynthesis with the PKS-NRPS poxE, by providing the olefin containing amino acid substrate via the synthesis of an ACP-bound dec-4-enoate. The cytochrome P450 monooxygenase poxM-catalyzed oxidation at the alpha-position creates the enzyme-bound 2-hydroxydec-4-enoyl-ACP thioester, which may be prone to spontaneous hydrolysis to yield 2-hydroxydec-4-enoic acid due to increased electrophilicity of the carbonyl. 2-hydroxydec-4-enoic acid can then be further oxidized by poxM to yield the alpha-ketoacid 2-oxodec-4-enoicacid, which is reductively aminated by the aminotransferase poxL to yield (S,E)-2-aminodec-4-enoic acid. The Hybrid PKS-NRPS synthetase poxE then performs condensation between the octaketide product of its PKS modules and the amino group of (S,E)-2-aminodec-4-enoic acid which is activated and incorporated by the adenylation domain. The resulting aminoacyl product can be cyclized by the Diels-Alderase PoxQ and reductively released by the reductive (R) domain of poxE to yield an aldehyde intermediate. The released aldehyde is then substrate for a Knoevenagel condensation by the hydrolyase poxO followed by an oxidation at the 5-position of the pyrrolidone ring. The presence of the olefin from the amino acid building block allows for migration of the substituted allyl group to occur. This allylic transposition reaction takes place in a conjugate addition, semipinacol-like fashion to yield a succinimide intermediate. Iterative two-electron oxidations of the C7 methyl of the succinimide intermediate to the carboxylic acid can be catalyzed by one of two remaining cytochrome P450 monooxygenasess poxC or poxD to yield oxaleimide A. Subsequent oxidation yields the maleimide scaffold oxaleimide I. Both oxaleimide A and oxaleimide I can undergo oxidative modifications in the decalin ring to yield the series of products oxaleimides B to H. This chain is Hydrolyase poxO, found in Penicillium oxalicum (strain 114-2 / CGMCC 5302) (Penicillium decumbens).